The following is a 414-amino-acid chain: Tyrosine--tRNA ligase (414 aa).

Tyrosine 38 provides a ligand contact to L-tyrosine. A 'HIGH' region motif is present at residues 43-52; it reads PTATSLHLGN. The L-tyrosine site is built by tyrosine 165 and glutamine 169. Positions 228–232 match the 'KMSKS' region motif; sequence KFGKS. An ATP-binding site is contributed by lysine 231. The 66-residue stretch at 349–414 folds into the S4 RNA-binding domain; sequence FNANQIIDLG…KKYFFMIELI (66 aa).

It belongs to the class-I aminoacyl-tRNA synthetase family. TyrS type 1 subfamily. Homodimer.

It localises to the cytoplasm. The enzyme catalyses tRNA(Tyr) + L-tyrosine + ATP = L-tyrosyl-tRNA(Tyr) + AMP + diphosphate + H(+). Its function is as follows. Catalyzes the attachment of tyrosine to tRNA(Tyr) in a two-step reaction: tyrosine is first activated by ATP to form Tyr-AMP and then transferred to the acceptor end of tRNA(Tyr). This is Tyrosine--tRNA ligase from Mesomycoplasma hyopneumoniae (strain 7448) (Mycoplasma hyopneumoniae).